Consider the following 261-residue polypeptide: tRNA pseudouridine synthase A (261 aa).

Residue D51 is the Nucleophile of the active site. Y109 contributes to the substrate binding site.

This sequence belongs to the tRNA pseudouridine synthase TruA family. As to quaternary structure, homodimer.

It carries out the reaction uridine(38/39/40) in tRNA = pseudouridine(38/39/40) in tRNA. Its function is as follows. Formation of pseudouridine at positions 38, 39 and 40 in the anticodon stem and loop of transfer RNAs. The polypeptide is tRNA pseudouridine synthase A (Shewanella amazonensis (strain ATCC BAA-1098 / SB2B)).